The chain runs to 322 residues: Ferredoxin--NADP reductase (322 aa).

FAD is bound by residues aspartate 34, glutamine 42, tyrosine 47, valine 87, phenylalanine 120, aspartate 279, and threonine 320.

This sequence belongs to the ferredoxin--NADP reductase type 2 family. Homodimer. FAD serves as cofactor.

It catalyses the reaction 2 reduced [2Fe-2S]-[ferredoxin] + NADP(+) + H(+) = 2 oxidized [2Fe-2S]-[ferredoxin] + NADPH. The polypeptide is Ferredoxin--NADP reductase (Streptococcus pneumoniae serotype 2 (strain D39 / NCTC 7466)).